Consider the following 219-residue polypeptide: Thymidylate kinase (219 aa).

ATP is bound at residue 7–14; sequence GIDGAGKS.

This sequence belongs to the thymidylate kinase family.

The enzyme catalyses dTMP + ATP = dTDP + ADP. Functionally, phosphorylation of dTMP to form dTDP in both de novo and salvage pathways of dTTP synthesis. The sequence is that of Thymidylate kinase from Chlorobium phaeobacteroides (strain DSM 266 / SMG 266 / 2430).